A 118-amino-acid chain; its full sequence is Ribosome-binding factor A (118 aa).

It belongs to the RbfA family. In terms of assembly, monomer. Binds 30S ribosomal subunits, but not 50S ribosomal subunits or 70S ribosomes.

It localises to the cytoplasm. One of several proteins that assist in the late maturation steps of the functional core of the 30S ribosomal subunit. Associates with free 30S ribosomal subunits (but not with 30S subunits that are part of 70S ribosomes or polysomes). Required for efficient processing of 16S rRNA. May interact with the 5'-terminal helix region of 16S rRNA. This chain is Ribosome-binding factor A, found in Shouchella clausii (strain KSM-K16) (Alkalihalobacillus clausii).